A 416-amino-acid polypeptide reads, in one-letter code: D-amino acid dehydrogenase (416 aa).

3–17 (VIVLGAGIIGVTSAY) lines the FAD pocket.

Belongs to the DadA oxidoreductase family. It depends on FAD as a cofactor.

The enzyme catalyses a D-alpha-amino acid + A + H2O = a 2-oxocarboxylate + AH2 + NH4(+). The protein operates within amino-acid degradation; D-alanine degradation; NH(3) and pyruvate from D-alanine: step 1/1. In terms of biological role, oxidative deamination of D-amino acids. In Sinorhizobium medicae (strain WSM419) (Ensifer medicae), this protein is D-amino acid dehydrogenase.